We begin with the raw amino-acid sequence, 329 residues long: Malate dehydrogenase (329 aa).

12–18 (GAAGQIG) serves as a coordination point for NAD(+). The substrate site is built by Arg-95 and Arg-101. NAD(+)-binding positions include Asn-108, Gln-115, and 132 to 134 (VGN). Residues Asn-134 and Arg-165 each contribute to the substrate site. The Proton acceptor role is filled by His-190.

It belongs to the LDH/MDH superfamily. MDH type 2 family. In terms of assembly, homodimer.

The enzyme catalyses (S)-malate + NAD(+) = oxaloacetate + NADH + H(+). Substrate inhibition is observed at high concentrations of oxaloacetate. Functionally, catalyzes the reversible oxidation of malate to oxaloacetate. Catalyzes the reduction of oxaloacetate more efficiently than the oxidation of malate. This chain is Malate dehydrogenase, found in Syntrophobacter fumaroxidans (strain DSM 10017 / MPOB).